Here is a 101-residue protein sequence, read N- to C-terminus: Large ribosomal subunit protein uL23 (101 aa).

Belongs to the universal ribosomal protein uL23 family. As to quaternary structure, part of the 50S ribosomal subunit. Contacts protein L29, and trigger factor when it is bound to the ribosome.

Its function is as follows. One of the early assembly proteins it binds 23S rRNA. One of the proteins that surrounds the polypeptide exit tunnel on the outside of the ribosome. Forms the main docking site for trigger factor binding to the ribosome. The protein is Large ribosomal subunit protein uL23 of Haemophilus ducreyi (strain 35000HP / ATCC 700724).